The chain runs to 171 residues: UPF0690 protein C1orf52 homolog A (171 aa).

Disordered stretches follow at residues 1-56 and 126-171; these read MAAE…GPDE and NVYQ…KRKV. Basic and acidic residues predominate over residues 47-56; the sequence is EAKKLPGPDE. Positions 146-160 are enriched in acidic residues; sequence EEEAQEDSPPSDDEQ.

It belongs to the UPF0690 family.

This chain is UPF0690 protein C1orf52 homolog A, found in Xenopus laevis (African clawed frog).